We begin with the raw amino-acid sequence, 72 residues long: Exodeoxyribonuclease 7 small subunit (72 aa).

This sequence belongs to the XseB family. In terms of assembly, heterooligomer composed of large and small subunits.

It localises to the cytoplasm. It carries out the reaction Exonucleolytic cleavage in either 5'- to 3'- or 3'- to 5'-direction to yield nucleoside 5'-phosphates.. Its function is as follows. Bidirectionally degrades single-stranded DNA into large acid-insoluble oligonucleotides, which are then degraded further into small acid-soluble oligonucleotides. The sequence is that of Exodeoxyribonuclease 7 small subunit from Chlamydia muridarum (strain MoPn / Nigg).